A 283-amino-acid polypeptide reads, in one-letter code: Pantothenate synthetase (283 aa).

Residue 30 to 37 participates in ATP binding; it reads MGNLHLGH. His-37 acts as the Proton donor in catalysis. Gln-61 contacts (R)-pantoate. Gln-61 serves as a coordination point for beta-alanine. 149-152 is an ATP binding site; the sequence is GQKD. Gln-155 serves as a coordination point for (R)-pantoate. Residues Ile-178 and 186-189 contribute to the ATP site; that span reads MSSR.

Belongs to the pantothenate synthetase family. In terms of assembly, homodimer.

The protein localises to the cytoplasm. The enzyme catalyses (R)-pantoate + beta-alanine + ATP = (R)-pantothenate + AMP + diphosphate + H(+). It functions in the pathway cofactor biosynthesis; (R)-pantothenate biosynthesis; (R)-pantothenate from (R)-pantoate and beta-alanine: step 1/1. In terms of biological role, catalyzes the condensation of pantoate with beta-alanine in an ATP-dependent reaction via a pantoyl-adenylate intermediate. The polypeptide is Pantothenate synthetase (Shewanella pealeana (strain ATCC 700345 / ANG-SQ1)).